We begin with the raw amino-acid sequence, 383 residues long: Putative F-box protein At3g22650 (383 aa).

Residues 3–50 (SCERSLLPIDIIEEICCRIPVEYLTQFKLTCKQWFALLKDKRFIYKYL) form the F-box domain.

In Arabidopsis thaliana (Mouse-ear cress), this protein is Putative F-box protein At3g22650.